Here is a 1271-residue protein sequence, read N- to C-terminus: Protein flightless-1 homolog (1271 aa).

Met-1 carries the N-acetylmethionine modification. The interaction with LRRFIP1 and LRRFIP2 stretch occupies residues 1 to 427; it reads MEATGVLPFV…SGSKDPLARK (427 aa). LRR repeat units follow at residues 7 to 32, 33 to 55, 56 to 78, 80 to 103, 104 to 126, 127 to 149, 150 to 173, 175 to 196, 197 to 222, 223 to 245, 247 to 268, 269 to 291, 293 to 316, 317 to 339, 340 to 363, and 365 to 385; these read LPFV…VKAM, TSLR…LAAL, QKLE…LSSL, SLRA…IFKL, DDLS…LENA, KNML…LFIN, LTDL…MRRL, HLQT…QLPA, MMAL…LEGL, SNLS…LYTL, SLRR…IDQW, VHLE…ICKL, KLKK…IGKL, TSLE…LCRC, PKLK…HFLT, and IQVL…PADR. Position 21 is an N6-acetyllysine (Lys-21). Ser-406 is subject to Phosphoserine. Position 436 is a phosphoserine; by SGK3 (Ser-436). Residues 495-827 are interaction with ACTL6A; that stretch reads VGQLPGLTIW…VVSRSLEGTE (333 aa). 3 Gelsolin-like repeats span residues 509–591, 629–703, and 759–831; these read FVPV…EEFL, NIKL…PGFW, and LMPG…AQVF. Ser-860 is modified (phosphoserine). The segment at 951 to 977 is disordered; it reads KTEDKEGKASAEAREGEEAAAEAEEKQ. Basic and acidic residues predominate over residues 952-967; sequence TEDKEGKASAEAREGE. Over residues 968–977 the composition is skewed to acidic residues; that stretch reads EAAAEAEEKQ. Residues 1183–1256 form a Gelsolin-like 4 repeat; the sequence is KCSDFCQDDL…VRKGNEQRAF (74 aa).

In terms of assembly, interacts with actin, ACTL6A and NCOA2. Interacts with CARM1. Interacts with LRRFIP1, LRRFIP2 and MYD88. Upon LPS stimulation, LRRFIP2 competes for MYD88-binding; LRRFIP1 constitutively blocks the interaction with MyD88, even in the absence of LPS. Interacts with the nuclear receptors ESR1 and THRB. Interacts with SGK3. Interacts (via the gelsolin-like region) with TMOD1 and TMOD3. Interacts with LMOD2, VCL, GSN and DES. As to expression, expressed in blastocyst.

Its subcellular location is the nucleus. It localises to the cytoplasm. The protein resides in the cytoskeleton. It is found in the microtubule organizing center. The protein localises to the centrosome. Its subcellular location is the cell junction. It localises to the focal adhesion. The protein resides in the cell projection. It is found in the podosome. In terms of biological role, is a regulator of actin polymerization, required for proper myofibril organization and regulation of the length of sarcomeric thin filaments. It also plays a role in the assembly of cardiomyocyte cell adhesion complexes. Regulates cytoskeletal rearrangements involved in cytokinesis and cell migration, by inhibiting Rac1-dependent paxillin phosphorylation. May play a role as coactivator in transcriptional activation by hormone-activated nuclear receptors (NR) and acts in cooperation with NCOA2 and CARM1. Involved in estrogen hormone signaling. This chain is Protein flightless-1 homolog (Flii), found in Mus musculus (Mouse).